We begin with the raw amino-acid sequence, 141 residues long: MAVQRTFSIIKPDAVAKNVIGEITTRFEKAGLRVVASKLKQLSKAEAEGFYAEHSARGFFGDLVAFMISGPVVVQVLEGENAIALNRELMGATNPKEAAAGTIRADFADSIDANAVHGSDSEAAAAREISYFFAATEVTAR.

Residues Lys-11, Phe-59, Arg-87, Thr-93, Arg-104, and Asn-114 each coordinate ATP. His-117 serves as the catalytic Pros-phosphohistidine intermediate.

Belongs to the NDK family. In terms of assembly, homotetramer. Requires Mg(2+) as cofactor.

Its subcellular location is the cytoplasm. The enzyme catalyses a 2'-deoxyribonucleoside 5'-diphosphate + ATP = a 2'-deoxyribonucleoside 5'-triphosphate + ADP. The catalysed reaction is a ribonucleoside 5'-diphosphate + ATP = a ribonucleoside 5'-triphosphate + ADP. Major role in the synthesis of nucleoside triphosphates other than ATP. The ATP gamma phosphate is transferred to the NDP beta phosphate via a ping-pong mechanism, using a phosphorylated active-site intermediate. The polypeptide is Nucleoside diphosphate kinase (Pseudomonas syringae pv. tomato (strain ATCC BAA-871 / DC3000)).